We begin with the raw amino-acid sequence, 146 residues long: HTH-type transcriptional regulator SarZ (146 aa).

The HTH marR-type domain occupies 9-139 (ERQLCFLFYV…LKETLQNFVN (131 aa)). A DNA-binding region (H-T-H motif) is located at residues 55–78 (IKTLGARVFLDSGTLTPLLKKLEK).

It belongs to the SarZ family.

The protein resides in the cytoplasm. In Staphylococcus saprophyticus subsp. saprophyticus (strain ATCC 15305 / DSM 20229 / NCIMB 8711 / NCTC 7292 / S-41), this protein is HTH-type transcriptional regulator SarZ (sarZ).